The primary structure comprises 511 residues: Mesoderm induction early response protein 1 (511 aa).

Positions 1–16 are enriched in low complexity; it reads MAEPSVESSSPGGSAT. Positions 1–171 are disordered; sequence MAEPSVESSS…EEESEEDEDY (171 aa). Ser10 carries the phosphoserine modification. The segment covering 17–36 has biased composition (basic and acidic residues); the sequence is SEDHEFDPSADMLVHDFDDE. Residues 37-46 are compositionally biased toward acidic residues; the sequence is RTLEEEEMME. Over residues 57 to 66 the composition is skewed to basic and acidic residues; the sequence is DLAREGDMPI. Residues 83-104 are compositionally biased toward acidic residues; it reads EEEEEEEEEEEGEDDEDADNDD. A compositionally biased stretch (polar residues) spans 128–143; sequence QSSNDDPSQSVTSQDA. Ser140 is modified (phosphoserine). Tyr154 bears the Phosphotyrosine mark. A phosphoserine mark is found at Ser159 and Ser165. Positions 159–171 are enriched in acidic residues; the sequence is SEIEEESEEDEDY. The region spanning 179–277 is the ELM2 domain; that stretch reads KEIMVGSMFQ…EALRRLRFNV (99 aa). A Glycyl lysine isopeptide (Lys-Gly) (interchain with G-Cter in SUMO2) cross-link involves residue Lys238. An SANT domain is found at 282–334; the sequence is EELSVWTEEECRNFEQGLKAYGKDFHLIQANKVRTRSVGECVAFYYMWKKSER. Positions 365–511 are disordered; it reads ESESAASSRA…KFEEHENTND (147 aa). Residues Ser366, Ser368, and Ser376 each carry the phosphoserine modification. Residues 397-408 are compositionally biased toward polar residues; it reads SSRNQNGVSSNG. Basic and acidic residues-rich tracts occupy residues 413–422 and 461–474; these read LNKEEVKVEG and ARNENDFDEKNERP. Residue Lys419 forms a Glycyl lysine isopeptide (Lys-Gly) (interchain with G-Cter in SUMO2) linkage. The span at 481-493 shows a compositional bias: polar residues; sequence NSSGKESPGSSEF. A phosphoserine mark is found at Ser482, Ser487, and Ser490. Over residues 499 to 511 the composition is skewed to basic and acidic residues; it reads SHGKFEEHENTND.

Interacts with HDAC1. Part of a complex containing at least CDYL, MIER1, MIER2, HDAC1 and HDAC2. Ubiquitously expressed. Isoform 1 is only expressed in testis.

Its subcellular location is the nucleus. In terms of biological role, transcriptional repressor regulating the expression of a number of genes including SP1 target genes. Probably functions through recruitment of HDAC1 a histone deacetylase involved in chromatin silencing. In Mus musculus (Mouse), this protein is Mesoderm induction early response protein 1 (Mier1).